The sequence spans 248 residues: 2,3-bisphosphoglycerate-dependent phosphoglycerate mutase 2 (248 aa).

Substrate-binding positions include 8 to 15 (RHGESAWN), 21 to 22 (TG), Arg-60, 87 to 90 (EKHY), Lys-98, 114 to 115 (RR), and 183 to 184 (GN). His-9 acts as the Tele-phosphohistidine intermediate in catalysis. The active-site Proton donor/acceptor is the Glu-87.

This sequence belongs to the phosphoglycerate mutase family. BPG-dependent PGAM subfamily.

The enzyme catalyses (2R)-2-phosphoglycerate = (2R)-3-phosphoglycerate. It functions in the pathway carbohydrate degradation; glycolysis; pyruvate from D-glyceraldehyde 3-phosphate: step 3/5. Catalyzes the interconversion of 2-phosphoglycerate and 3-phosphoglycerate. In Bacteroides thetaiotaomicron (strain ATCC 29148 / DSM 2079 / JCM 5827 / CCUG 10774 / NCTC 10582 / VPI-5482 / E50), this protein is 2,3-bisphosphoglycerate-dependent phosphoglycerate mutase 2.